The following is a 359-amino-acid chain: Cell division protein ZipA (359 aa).

The Periplasmic portion of the chain corresponds to 1–4 (MDLN). A helical transmembrane segment spans residues 5 to 25 (TILIILGILALVALVAHGLWS). The Cytoplasmic segment spans residues 26-359 (NRREKSQYFE…AEEEYLAKIK (334 aa)). Positions 78-101 (PPVQQPLNTEPEPITQETPVRAEP) are disordered.

Belongs to the ZipA family. Interacts with FtsZ via their C-terminal domains.

It is found in the cell inner membrane. Essential cell division protein that stabilizes the FtsZ protofilaments by cross-linking them and that serves as a cytoplasmic membrane anchor for the Z ring. Also required for the recruitment to the septal ring of downstream cell division proteins. In Mannheimia succiniciproducens (strain KCTC 0769BP / MBEL55E), this protein is Cell division protein ZipA.